A 360-amino-acid chain; its full sequence is UPF0324 membrane protein plu2856 (360 aa).

Transmembrane regions (helical) follow at residues 20–42 (LIPG…NIPW), 47–69 (GLGT…YPLL), 104–126 (VGIT…AIWL), 136–155 (QTVI…AIMA), 167–189 (VAVA…PWFY), 239–256 (MIRV…SRYI), 277–299 (WFAV…AAIV), 304–326 (NIDT…VSAI), and 333–355 (PILL…NLGI).

This sequence belongs to the UPF0324 family.

It localises to the cell membrane. The polypeptide is UPF0324 membrane protein plu2856 (Photorhabdus laumondii subsp. laumondii (strain DSM 15139 / CIP 105565 / TT01) (Photorhabdus luminescens subsp. laumondii)).